Consider the following 428-residue polypeptide: 3-deoxy-D-manno-octulosonic acid transferase (428 aa).

The active-site Proton acceptor is glutamate 64. CMP-binding positions include 274-275 (PR), 316-318 (LGE), and 342-345 (NLIE).

The protein belongs to the glycosyltransferase group 1 family. Glycosyltransferase 30 subfamily.

The protein resides in the cell inner membrane. It catalyses the reaction lipid IVA (E. coli) + CMP-3-deoxy-beta-D-manno-octulosonate = alpha-Kdo-(2-&gt;6)-lipid IVA (E. coli) + CMP + H(+). It participates in bacterial outer membrane biogenesis; LPS core biosynthesis. Its function is as follows. Involved in lipopolysaccharide (LPS) biosynthesis. Catalyzes the transfer of a single 3-deoxy-D-manno-octulosonate (Kdo) residue from CMP-Kdo to lipid IV(A), the tetraacyldisaccharide-1,4'-bisphosphate precursor of lipid A. In Bordetella pertussis, this protein is 3-deoxy-D-manno-octulosonic acid transferase (waaA).